The chain runs to 695 residues: Variediene synthase (695 aa).

Residues 1–23 (MVPTSLSPDDTSDPVPRSSSDIQ) form a disordered region. A terpene cyclase region spans residues 7 to 332 (SPDDTSDPVP…PRYHPWLCEE (326 aa)). Asp-98 is a Mg(2+) binding site. Residues Asp-98, 184–187 (RIID), Asn-228, 232–236 (SFDIE), and 324–325 (RY) each bind substrate. A DDXXD 1 motif is present at residues 98 to 102 (DNVVE). The NSE/DTE motif lies at 228–236 (NDYFSFDIE). The interval 353 to 392 (RRSISGDSISSESSVWSGASDRSARSSVSSAPSLDEGKEP) is disordered. The segment covering 357 to 385 (SGDSISSESSVWSGASDRSARSSVSSAPS) has biased composition (low complexity). Positions 415, 418, and 447 each coordinate isopentenyl diphosphate. Residues Asp-454 and Asp-458 each coordinate Mg(2+). Positions 454 to 458 (DDIED) match the DDXXD 2 motif. Residue Arg-463 participates in dimethylallyl diphosphate binding. Arg-464 lines the isopentenyl diphosphate pocket. Positions 541, 542, 579, 586, 595, and 605 each coordinate dimethylallyl diphosphate.

In the N-terminal section; belongs to the terpene synthase family. This sequence in the C-terminal section; belongs to the FPP/GGPP synthase family. Hexamer. The cofactor is Mg(2+).

It carries out the reaction isopentenyl diphosphate + (2E,6E)-farnesyl diphosphate = (2E,6E,10E)-geranylgeranyl diphosphate + diphosphate. The catalysed reaction is (2E,6E,10E)-geranylgeranyl diphosphate = variediene + diphosphate. Its pathway is secondary metabolite biosynthesis; terpenoid biosynthesis. Bifunctional terpene synthase converts DMAPP and IPP, and also GGPP, into variediene as a single product. The C-terminal prenyltransferase domain of AbVS catalyzes formation of GGPP, whereas the N-terminal terpene cyclase domain catalyzes the cyclization of GGPP to variediene. This Aspergillus brasiliensis (strain CBS 101740 / IMI 381727 / IBT 21946) protein is Variediene synthase.